The sequence spans 189 residues: Large ribosomal subunit protein uL5 (189 aa).

This sequence belongs to the universal ribosomal protein uL5 family. Part of the 50S ribosomal subunit; part of the 5S rRNA/L5/L18/L25 subcomplex. Contacts the 5S rRNA and the P site tRNA. Forms a bridge to the 30S subunit in the 70S ribosome.

In terms of biological role, this is one of the proteins that bind and probably mediate the attachment of the 5S RNA into the large ribosomal subunit, where it forms part of the central protuberance. In the 70S ribosome it contacts protein S13 of the 30S subunit (bridge B1b), connecting the 2 subunits; this bridge is implicated in subunit movement. Contacts the P site tRNA; the 5S rRNA and some of its associated proteins might help stabilize positioning of ribosome-bound tRNAs. The polypeptide is Large ribosomal subunit protein uL5 (Kineococcus radiotolerans (strain ATCC BAA-149 / DSM 14245 / SRS30216)).